We begin with the raw amino-acid sequence, 134 residues long: Profilin-1 (134 aa).

Cys-13 and Cys-118 are disulfide-bonded. Positions 84–100 (AVVRGKKGSGGITIKKT) match the Involved in PIP2 interaction motif. Position 114 is a phosphothreonine (Thr-114).

It belongs to the profilin family. In terms of assembly, occurs in many kinds of cells as a complex with monomeric actin in a 1:1 ratio. Phosphorylated by MAP kinases.

The protein localises to the cytoplasm. Its subcellular location is the cytoskeleton. Functionally, binds to actin and affects the structure of the cytoskeleton. At high concentrations, profilin prevents the polymerization of actin, whereas it enhances it at low concentrations. The protein is Profilin-1 of Olea europaea (Common olive).